We begin with the raw amino-acid sequence, 299 residues long: Leucine zipper transcription factor-like protein 1 (299 aa).

Positions 96–296 (LKLQTDISEL…DLRKRLAQYE (201 aa)) form a coiled coil. The interval 145–299 (GTAELLNKEI…KRLAQYEPED (155 aa)) is interaction with BSS9.

The protein belongs to the LZTFL1 family. Self-associates. Interacts with BBS9; the interaction mediates the association of LZTL1 with the BBsome complex and regulates BBSome ciliary trafficking. In terms of tissue distribution, expressed in prostate, ovary, stomach, pancreas, esophagus, breast, liver, bladder, kidney, thyroid, colon and lung (at protein level). Down-regulated in multiple primary tumors (at protein level). Detected in testis, heart, skeletal muscle, thymus, spleen, small intestine, and peripheral blood leukocytes.

It localises to the cytoplasm. Its function is as follows. Regulates ciliary localization of the BBSome complex. Together with the BBSome complex, controls SMO ciliary trafficking and contributes to the sonic hedgehog (SHH) pathway regulation. May play a role in neurite outgrowth. May have tumor suppressor function. The polypeptide is Leucine zipper transcription factor-like protein 1 (LZTFL1) (Homo sapiens (Human)).